A 515-amino-acid chain; its full sequence is 1-pyrroline-5-carboxylate dehydrogenase (515 aa).

Catalysis depends on residues Glu-286 and Cys-320.

Belongs to the aldehyde dehydrogenase family. RocA subfamily.

It catalyses the reaction L-glutamate 5-semialdehyde + NAD(+) + H2O = L-glutamate + NADH + 2 H(+). The protein operates within amino-acid degradation; L-proline degradation into L-glutamate; L-glutamate from L-proline: step 2/2. The protein is 1-pyrroline-5-carboxylate dehydrogenase of Bacillus cereus (strain ATCC 10987 / NRS 248).